The sequence spans 95 residues: Blastocyst protein 4 (95 aa).

Positions 1–20 are cleaved as a signal peptide; the sequence is MGAVFAIIGGFALDSPILRL.

The polypeptide is Blastocyst protein 4 (Oryctolagus cuniculus (Rabbit)).